Reading from the N-terminus, the 420-residue chain is Bile acid-CoA:amino acid N-acyltransferase (420 aa).

Residue Lys40 is modified to N6-succinyllysine. Ser125 is subject to Phosphoserine. Residues Cys235 and Asp328 each act as charge relay system in the active site. Lys346 and Lys350 each carry N6-succinyllysine. The Charge relay system role is filled by His362. An N6-succinyllysine modification is found at Lys409. Phosphoserine is present on Ser418.

It belongs to the C/M/P thioester hydrolase family. In terms of assembly, monomer. Highly expressed in liver, kidney, gallbladder, proximal intestine and distal intestine. Weakly expressed in adrenal gland, lung, brain and muscle.

The protein resides in the cytoplasm. Its subcellular location is the cytosol. It localises to the peroxisome. It catalyses the reaction choloyl-CoA + glycine = glycocholate + CoA + H(+). The enzyme catalyses hexadecanoyl-CoA + H2O = hexadecanoate + CoA + H(+). The catalysed reaction is choloyl-CoA + H2O = cholate + CoA + H(+). It carries out the reaction chenodeoxycholoyl-CoA + H2O = chenodeoxycholate + CoA + H(+). It catalyses the reaction eicosanoyl-CoA + H2O = eicosanoate + CoA + H(+). The enzyme catalyses octadecanoyl-CoA + H2O = octadecanoate + CoA + H(+). The catalysed reaction is docosanoyl-CoA + H2O = docosanoate + CoA + H(+). It carries out the reaction tetracosanoyl-CoA + H2O = tetracosanoate + CoA + H(+). It catalyses the reaction hexacosanoyl-CoA + H2O = hexacosanoate + CoA + H(+). The enzyme catalyses dodecanoyl-CoA + H2O = dodecanoate + CoA + H(+). The catalysed reaction is tetradecanoyl-CoA + H2O = tetradecanoate + CoA + H(+). It carries out the reaction choloyl-CoA + taurine = taurocholate + CoA + H(+). It catalyses the reaction chenodeoxycholoyl-CoA + glycine = glycochenodeoxycholate + CoA + H(+). The enzyme catalyses chenodeoxycholoyl-CoA + taurine = taurochenodeoxycholate + CoA + H(+). The catalysed reaction is eicosanoyl-CoA + glycine = N-eicosanoylglycinate + CoA + H(+). It carries out the reaction hexacosanoyl-CoA + glycine = N-hexacosanoylglycine + CoA + H(+). It catalyses the reaction docosanoyl-CoA + glycine = N-docosanoylglycine + CoA + H(+). Functionally, catalyzes the amidation of bile acids (BAs) with the amino acid taurine. Selective for taurine conjugation of cholyl CoA and only taurine-conjugated BAs are found in bile. Amidation of BAs in the liver with taurine prior to their excretion into bile is an important biochemical event in bile acid metabolism. This conjugation (or amidation) plays several important biological roles in that it promotes the secretion of BAs and cholesterol into bile and increases the detergent properties of BAs in the intestine, which facilitates lipid and vitamin absorption. May also act as an acyl-CoA thioesterase that regulates intracellular levels of free fatty acids. In vitro, catalyzes the hydrolysis of long- and very long-chain saturated acyl-CoAs to the free fatty acid and coenzyme A (CoASH), and conjugates glycine to these acyl-CoAs. The chain is Bile acid-CoA:amino acid N-acyltransferase (Baat) from Mus musculus (Mouse).